The chain runs to 437 residues: 23S rRNA (uracil(1939)-C(5))-methyltransferase RlmD (437 aa).

The 59-residue stretch at 10-68 (SAPRNTTFVAEILDLDYQGRGVAKVQGKTWFIENALPQEKVEVRIVDEKRHYGHGISCK) folds into the TRAM domain. Residues Cys81, Cys87, Cys90, and Cys167 each contribute to the [4Fe-4S] cluster site. Residues Gln270, Phe299, Asn304, Glu320, Asn347, and Asp368 each coordinate S-adenosyl-L-methionine. The active-site Nucleophile is the Cys394.

This sequence belongs to the class I-like SAM-binding methyltransferase superfamily. RNA M5U methyltransferase family. RlmD subfamily.

The catalysed reaction is uridine(1939) in 23S rRNA + S-adenosyl-L-methionine = 5-methyluridine(1939) in 23S rRNA + S-adenosyl-L-homocysteine + H(+). In terms of biological role, catalyzes the formation of 5-methyl-uridine at position 1939 (m5U1939) in 23S rRNA. This Pasteurella multocida (strain Pm70) protein is 23S rRNA (uracil(1939)-C(5))-methyltransferase RlmD.